We begin with the raw amino-acid sequence, 348 residues long: Protein RecA (348 aa).

65-72 (GPESSGKT) lines the ATP pocket.

The protein belongs to the RecA family.

It localises to the cytoplasm. Can catalyze the hydrolysis of ATP in the presence of single-stranded DNA, the ATP-dependent uptake of single-stranded DNA by duplex DNA, and the ATP-dependent hybridization of homologous single-stranded DNAs. It interacts with LexA causing its activation and leading to its autocatalytic cleavage. The polypeptide is Protein RecA (Vibrio anguillarum (strain ATCC 68554 / 775) (Listonella anguillarum)).